The primary structure comprises 234 residues: Proteasome subunit beta (234 aa).

The interval 1–35 (MNPDLNMNPHDSGRTDPYAPELGEIATDEGDGENV) is disordered. A propeptide spans 1–39 (MNPDLNMNPHDSGRTDPYAPELGEIATDEGDGENVTKTG) (removed in mature form; by autocatalysis). T40 (nucleophile) is an active-site residue.

This sequence belongs to the peptidase T1B family. In terms of assembly, the 20S proteasome core is composed of 14 alpha and 14 beta subunits that assemble into four stacked heptameric rings, resulting in a barrel-shaped structure. The two inner rings, each composed of seven catalytic beta subunits, are sandwiched by two outer rings, each composed of seven alpha subunits. The catalytic chamber with the active sites is on the inside of the barrel. Has a gated structure, the ends of the cylinder being occluded by the N-termini of the alpha-subunits. Is capped at one or both ends by the proteasome regulatory ATPase, PAN.

It localises to the cytoplasm. It carries out the reaction Cleavage of peptide bonds with very broad specificity.. Its activity is regulated as follows. The formation of the proteasomal ATPase PAN-20S proteasome complex, via the docking of the C-termini of PAN into the intersubunit pockets in the alpha-rings, triggers opening of the gate for substrate entry. Interconversion between the open-gate and close-gate conformations leads to a dynamic regulation of the 20S proteasome proteolysis activity. Component of the proteasome core, a large protease complex with broad specificity involved in protein degradation. The chain is Proteasome subunit beta from Halorhabdus utahensis (strain DSM 12940 / JCM 11049 / AX-2).